The primary structure comprises 842 residues: MAAPILKDVVAYVEVWSSNGTENYSKTFTTQLVDMGAKVSKTFNKQVTHVIFKDGYQSTWDKARKRGVKLVSVLWVEKCRTAGAHIDESLFPAANTNEHLPSLIKKKRKCMQPKDFNFKTPENDKRFQKKFEKMAKELQRQKTSLDDDVPILLFESNGSLTYSPTIKINSSHHSAMEKRLQEMKEKRENLSPTSSQMIQQSHDNPSNSLCEAPLNISHDTLCSDESIAGGLHSSFDDLCGNSECGNQERKLGGSINDTKSDMCISSLVLKTNNTHLSPSFAHLDKSSPQKFLSNLSKEEINLQRNIVGKIVTPDQKQAAGMSQETFEEKYRLSPTLSSTKGHLLIHSRPRSSSVKRKRVSYGFHSPPKEKCKRKRSIRRSIMPRLQLCRSEGSLQCMAGPALEALGCGESSYDDYFSPDNLKERNSENLPPKSQLPSNPAQFSCRSLSKKERTSIFEMSDFSCVGKKPRTVDITSFTAKTICSPQKTASGEGCATFSCVTSEESSAPEETLRYCRQAGPQQKEDAWPEGNGFSYTIEDPSLPKGHDGDLTPFEGILEEVKEAVGLKSTQDKGTTSKISNSSEGEAPSEHEPRSVVDCNVERSAEEKENLPGGYSGSVKNRPTRRDVLDGSCDSFKDLIKPHEELKKSGKGKKPTRTLVMTSMPSEKQNVVIQVVDKLKGFSIARDVCETTTHVLSGKPLRTLNVLLGIARGCWVLSYDWVLWSLESGQWISEEPFELSNHFPAAPLCRRECHLSAGPYRGTLFADQPVMFVSPASSPPVAKLCELVHLCGGRVSQVPRQASIVIGPYSGKKKATVKYLSEKWVLDSITQHKVCASENYLLPQ.

The region spanning 1–93 (MAAPILKDVV…AHIDESLFPA (93 aa)) is the BRCT 1 domain. 4 positions are modified to phosphoserine: Ser-279, Ser-287, Ser-296, and Ser-333. Thr-335 bears the Phosphothreonine mark. Basic residues predominate over residues 346 to 359 (HSRPRSSSVKRKRV). 3 disordered regions span residues 346–375 (HSRP…KRKR), 418–443 (PDNL…AQFS), and 563–624 (VGLK…PTRR). Composition is skewed to polar residues over residues 434–443 (QLPSNPAQFS) and 566–582 (KSTQ…NSSE). Basic and acidic residues predominate over residues 586–608 (PSEHEPRSVVDCNVERSAEEKEN). BRCT domains are found at residues 647–737 (SGKG…PFEL) and 758–840 (YRGT…NYLL).

Interacts with CDC27 and maybe other components of the APC/C complex. Interacts with histone variant H2AX under DNA damage conditions.

It localises to the cytoplasm. It is found in the cytoskeleton. The protein localises to the microtubule organizing center. Its subcellular location is the centrosome. Its function is as follows. Implicated in chromosome condensation and DNA damage induced cellular responses. May play a role in neurogenesis and regulation of the size of the cerebral cortex. The protein is Microcephalin of Macaca fascicularis (Crab-eating macaque).